We begin with the raw amino-acid sequence, 621 residues long: uncharacterized protein (621 aa).

The next 3 helical transmembrane spans lie at 240 to 260 (FFDAFFVILLLICHLNNNLLW), 548 to 568 (LGIVTAVVFGIIEFFNCVWTV), and 587 to 607 (VIIGIGTILVLTLLITILTFM).

It is found in the cell membrane. This is an uncharacterized protein from Mycoplasma pneumoniae (strain ATCC 29342 / M129 / Subtype 1) (Mycoplasmoides pneumoniae).